The primary structure comprises 834 residues: Protein Jade-1 (834 aa).

Residues 1–46 (MKRGRLPSSSEDSDDNGSLSTTWSQHSRSQHGRSSTCSRPEDRKPS) form a disordered region. Low complexity predominate over residues 24–35 (SQHSRSQHGRSS). Positions 61 to 81 (DSYQLNPDDYYVLADPWRQEW) are interaction with KAT7/HBO1 and histones. The interaction with histones stretch occupies residues 81 to 189 (WEKGVQVPVS…EQRCYDNMNH (109 aa)). Ser90 is subject to Phosphoserine. Residue Thr93 is modified to Phosphothreonine. Residue Lys115 forms a Glycyl lysine isopeptide (Lys-Gly) (interchain with G-Cter in SUMO2) linkage. The PHD-type 1 zinc finger occupies 204-254 (DVVCDVCQSPDGEDGNEMVFCDKCNICVHQACYGILKVPEGSWLCRTCALG). The segment at 256–290 (QPKCLLCPKKGGAMKPTRSGTKWVHVSCALWIPEV) adopts a C2HC pre-PHD-type zinc-finger fold. The PHD-type 2 zinc-finger motif lies at 314–370 (LVCSLCNEKFGASIQCSVKNCRTAFHVTCAFDRGLEMKTILAENDEVKFKSYCPKHS). The interval 367–409 (PKHSSHRKPEEGLGEGAAQENGAPESSPQSPLEPYGSLEPNRE) is disordered. A Glycyl lysine isopeptide (Lys-Gly) (interchain with G-Cter in SUMO2) cross-link involves residue Lys573. Disordered regions lie at residues 589–621 (HPLK…CGRR) and 676–716 (DKSF…GTRK). A Phosphoserine modification is found at Ser603. N6-acetyllysine is present on Lys609. Phosphoserine is present on residues Ser704 and Ser735. The segment at 738–819 (KSWGGFRIPK…EKKCIHASST (82 aa)) is disordered. Basic and acidic residues-rich tracts occupy residues 747 to 768 (KKGE…HSDC) and 777 to 790 (PAKE…RADS).

Belongs to the JADE family. As to quaternary structure, component of the HBO1 complex composed at least of ING4 or ING5, KAT7/HBO1, MEAF6, and one of JADE1, JADE2 and JADE3. Interacts with NPHP4. Highly expressed in kidney. Also present in liver (at protein level).

The protein localises to the nucleus. Its subcellular location is the chromosome. It is found in the cytoplasm. The protein resides in the cytoskeleton. It localises to the cilium basal body. In terms of biological role, scaffold subunit of some HBO1 complexes, which have a histone H4 acetyltransferase activity. Plays a key role in HBO1 complex by directing KAT7/HBO1 specificity towards histone H4 acetylation (H4K5ac, H4K8ac and H4K12ac), regulating DNA replication initiation, regulating DNA replication initiation. May also promote acetylation of nucleosomal histone H4 by KAT5. Promotes apoptosis. May act as a renal tumor suppressor. Negatively regulates canonical Wnt signaling; at least in part, cooperates with NPHP4 in this function. The polypeptide is Protein Jade-1 (Jade1) (Mus musculus (Mouse)).